The primary structure comprises 248 residues: Adenosylcobinamide-GDP ribazoletransferase (248 aa).

The next 7 helical transmembrane spans lie at 24–44 (EINL…IGAW), 70–90 (IIIT…GLFS), 106–126 (VGAN…SLFL), 134–154 (IGWL…LLFA), 157–177 (TYAG…WWPV), 188–210 (LGLF…TIIY), and 228–248 (AGGQ…WGLI).

The protein belongs to the CobS family. Requires Mg(2+) as cofactor.

The protein localises to the cell membrane. The enzyme catalyses alpha-ribazole + adenosylcob(III)inamide-GDP = adenosylcob(III)alamin + GMP + H(+). It carries out the reaction alpha-ribazole 5'-phosphate + adenosylcob(III)inamide-GDP = adenosylcob(III)alamin 5'-phosphate + GMP + H(+). Its pathway is cofactor biosynthesis; adenosylcobalamin biosynthesis; adenosylcobalamin from cob(II)yrinate a,c-diamide: step 7/7. Functionally, joins adenosylcobinamide-GDP and alpha-ribazole to generate adenosylcobalamin (Ado-cobalamin). Also synthesizes adenosylcobalamin 5'-phosphate from adenosylcobinamide-GDP and alpha-ribazole 5'-phosphate. The sequence is that of Adenosylcobinamide-GDP ribazoletransferase from Listeria monocytogenes serotype 4b (strain CLIP80459).